A 317-amino-acid chain; its full sequence is Methionyl-tRNA formyltransferase (317 aa).

Residue 112–115 (SILP) coordinates (6S)-5,6,7,8-tetrahydrofolate.

Belongs to the Fmt family.

It carries out the reaction L-methionyl-tRNA(fMet) + (6R)-10-formyltetrahydrofolate = N-formyl-L-methionyl-tRNA(fMet) + (6S)-5,6,7,8-tetrahydrofolate + H(+). Functionally, attaches a formyl group to the free amino group of methionyl-tRNA(fMet). The formyl group appears to play a dual role in the initiator identity of N-formylmethionyl-tRNA by promoting its recognition by IF2 and preventing the misappropriation of this tRNA by the elongation apparatus. This Actinobacillus succinogenes (strain ATCC 55618 / DSM 22257 / CCUG 43843 / 130Z) protein is Methionyl-tRNA formyltransferase.